A 208-amino-acid polypeptide reads, in one-letter code: CKLF-like MARVEL transmembrane domain-containing protein 4 (208 aa).

The span at 1–11 shows a compositional bias: acidic residues; the sequence is MRGGEELDGFE. Positions 1–38 are disordered; the sequence is MRGGEELDGFEGEASSTSMISGASSPYQPTTEPVSQRR. A compositionally biased stretch (low complexity) spans 15–25; that stretch reads SSTSMISGASS. The MARVEL domain maps to 49-176; it reads YLRGALGRLK…STFLAMQKWR (128 aa). The next 4 membrane-spanning stretches (helical) occupy residues 59 to 79, 85 to 105, 123 to 143, and 151 to 171; these read VAQV…MECS, YFFE…LILF, LVNT…LAAL, and IAAV…TFLA. The residue at position 194 (Ser194) is a Phosphoserine.

This sequence belongs to the chemokine-like factor family. Interacts with PD1L1 and CMTM6.

It localises to the membrane. Its function is as follows. Acts as a backup for CMTM6 to regulate plasma membrane expression of PD-L1/CD274, an immune inhibitory ligand critical for immune tolerance to self and antitumor immunity. May protect PD-L1/CD274 from being polyubiquitinated and targeted for degradation. This Mus musculus (Mouse) protein is CKLF-like MARVEL transmembrane domain-containing protein 4.